Reading from the N-terminus, the 395-residue chain is Succinyl-diaminopimelate desuccinylase (395 aa).

His74 is a binding site for Zn(2+). Residue Asp76 is part of the active site. Zn(2+) is bound at residue Asp107. Glu141 functions as the Proton acceptor in the catalytic mechanism. Zn(2+) contacts are provided by Glu142, Glu170, and His368.

This sequence belongs to the peptidase M20A family. DapE subfamily. In terms of assembly, homodimer. The cofactor is Zn(2+). It depends on Co(2+) as a cofactor.

The catalysed reaction is N-succinyl-(2S,6S)-2,6-diaminopimelate + H2O = (2S,6S)-2,6-diaminopimelate + succinate. It functions in the pathway amino-acid biosynthesis; L-lysine biosynthesis via DAP pathway; LL-2,6-diaminopimelate from (S)-tetrahydrodipicolinate (succinylase route): step 3/3. In terms of biological role, catalyzes the hydrolysis of N-succinyl-L,L-diaminopimelic acid (SDAP), forming succinate and LL-2,6-diaminopimelate (DAP), an intermediate involved in the bacterial biosynthesis of lysine and meso-diaminopimelic acid, an essential component of bacterial cell walls. This Brucella melitensis biotype 1 (strain ATCC 23456 / CCUG 17765 / NCTC 10094 / 16M) protein is Succinyl-diaminopimelate desuccinylase.